Here is a 230-residue protein sequence, read N- to C-terminus: Cutinase 1 (230 aa).

The signal sequence occupies residues 1–16; it reads MKFFALTTLLAATASA. A propeptide spanning residues 17-31 is cleaved from the precursor; the sequence is LPTSNPAQELEARQL. An N-D-glucuronoyl glycine modification is found at glycine 32. A disulfide bridge connects residues cysteine 47 and cysteine 125. Serine 136 serves as the catalytic Nucleophile. A disulfide bond links cysteine 187 and cysteine 194. Aspartate 191 is a catalytic residue. The active-site Proton donor/acceptor is the histidine 204.

Belongs to the cutinase family. In terms of processing, the 2 disulfide bonds play a critical role in holding the catalytic residues in juxta-position; reduction of the disulfide bridges results in the complete inactivation of the enzyme. O-glycosylated; contains one mole each of mannose, arabinose, N-acetylglucosamine, and glucuronic acid.

Its subcellular location is the secreted. It carries out the reaction cutin + H2O = cutin monomers.. Its activity is regulated as follows. Inhibited by n-undecyl phosphonate (C11Y4). Inhibited by paraoxon. In terms of biological role, catalyzes the hydrolysis of complex carboxylic polyesters found in the cell wall of plants. Degrades cutin, a macromolecule that forms the structure of the plant cuticle. Allows pathogenic fungi to penetrate through the cuticular barrier into the host plant during the initial stage of fungal infection. The sequence is that of Cutinase 1 (CUT1) from Fusarium vanettenii (Neocosmospora pisi).